Reading from the N-terminus, the 157-residue chain is SsrA-binding protein (157 aa).

Residues 133–157 are disordered; the sequence is HDKRNSIKEREGKREVERALKSRSR.

This sequence belongs to the SmpB family.

The protein resides in the cytoplasm. Its function is as follows. Required for rescue of stalled ribosomes mediated by trans-translation. Binds to transfer-messenger RNA (tmRNA), required for stable association of tmRNA with ribosomes. tmRNA and SmpB together mimic tRNA shape, replacing the anticodon stem-loop with SmpB. tmRNA is encoded by the ssrA gene; the 2 termini fold to resemble tRNA(Ala) and it encodes a 'tag peptide', a short internal open reading frame. During trans-translation Ala-aminoacylated tmRNA acts like a tRNA, entering the A-site of stalled ribosomes, displacing the stalled mRNA. The ribosome then switches to translate the ORF on the tmRNA; the nascent peptide is terminated with the 'tag peptide' encoded by the tmRNA and targeted for degradation. The ribosome is freed to recommence translation, which seems to be the essential function of trans-translation. This Verminephrobacter eiseniae (strain EF01-2) protein is SsrA-binding protein.